Here is a 101-residue protein sequence, read N- to C-terminus: MTRSKPNKNTKKYLKHNKGFYGRKKNCLKLAKQYYIKSLFKKYIDKKNKKRLILKKKIALINFFSRIYFGLSYSKFVYILKINNCKLNKNIILFLLLKTIV.

The protein belongs to the bacterial ribosomal protein bL20 family.

Binds directly to 23S ribosomal RNA and is necessary for the in vitro assembly process of the 50S ribosomal subunit. It is not involved in the protein synthesizing functions of that subunit. The chain is Large ribosomal subunit protein bL20 (rplT) from Carsonella ruddii (strain PV).